Here is a 219-residue protein sequence, read N- to C-terminus: Kynurenine formamidase (219 aa).

Trp28 serves as a coordination point for substrate. Positions 58, 62, and 64 each coordinate Zn(2+). The active-site Proton donor/acceptor is His68. Positions 170 and 182 each coordinate Zn(2+).

Belongs to the Cyclase 1 superfamily. KynB family. As to quaternary structure, homodimer. It depends on Zn(2+) as a cofactor.

The enzyme catalyses N-formyl-L-kynurenine + H2O = L-kynurenine + formate + H(+). The protein operates within amino-acid degradation; L-tryptophan degradation via kynurenine pathway; L-kynurenine from L-tryptophan: step 2/2. Catalyzes the hydrolysis of N-formyl-L-kynurenine to L-kynurenine, the second step in the kynurenine pathway of tryptophan degradation. The chain is Kynurenine formamidase from Cupriavidus pinatubonensis (strain JMP 134 / LMG 1197) (Cupriavidus necator (strain JMP 134)).